Reading from the N-terminus, the 129-residue chain is 3-aminoacrylate deaminase RutC (129 aa).

It belongs to the RutC family.

The catalysed reaction is (Z)-3-aminoacrylate + H2O + H(+) = 3-oxopropanoate + NH4(+). Involved in pyrimidine catabolism. Catalyzes the deamination of 3-aminoacrylate to malonic semialdehyde, a reaction that can also occur spontaneously. RutC may facilitate the reaction and modulate the metabolic fitness, rather than catalyzing essential functions. In Caulobacter segnis (strain ATCC 21756 / DSM 7131 / JCM 7823 / NBRC 15250 / LMG 17158 / TK0059) (Mycoplana segnis), this protein is 3-aminoacrylate deaminase RutC.